The sequence spans 385 residues: ATP phosphoribosyltransferase regulatory subunit (385 aa).

The protein belongs to the class-II aminoacyl-tRNA synthetase family. HisZ subfamily. In terms of assembly, heteromultimer composed of HisG and HisZ subunits.

Its subcellular location is the cytoplasm. Its pathway is amino-acid biosynthesis; L-histidine biosynthesis; L-histidine from 5-phospho-alpha-D-ribose 1-diphosphate: step 1/9. Its function is as follows. Required for the first step of histidine biosynthesis. May allow the feedback regulation of ATP phosphoribosyltransferase activity by histidine. This chain is ATP phosphoribosyltransferase regulatory subunit, found in Bordetella parapertussis (strain 12822 / ATCC BAA-587 / NCTC 13253).